We begin with the raw amino-acid sequence, 478 residues long: Phosphoglycerate kinase 2, chloroplastic (478 aa).

The transit peptide at Met1 to Met74 directs the protein to the chloroplast. At Ser78 the chain carries Phosphoserine. Residues Ala96, Asp97, Asn99, Arg113, Thr135, His136, Gly138, Arg139, Arg194, His226, and Arg227 each contribute to the (2R)-3-phosphoglycerate site. Gly272 is an ADP binding site. Position 272 (Gly272) interacts with CDP. Residues Lys274 and Lys278 each coordinate AMP. Lys278 is an ATP binding site. Gly296 contacts ADP. CDP is bound at residue Gly296. 2 residues coordinate AMP: Gly297 and Gly369. ATP contacts are provided by Gly297 and Gly369. Gly394 and Phe399 together coordinate CDP. Phe399 contributes to the ADP binding site. AMP is bound at residue Glu400. 3 residues coordinate ATP: Glu400, Asp431, and Ser432. Position 431 (Asp431) interacts with Mg(2+).

This sequence belongs to the phosphoglycerate kinase family. In terms of assembly, monomer. Mg(2+) is required as a cofactor.

It localises to the plastid. The protein resides in the chloroplast. It carries out the reaction (2R)-3-phosphoglycerate + ATP = (2R)-3-phospho-glyceroyl phosphate + ADP. It functions in the pathway carbohydrate biosynthesis; Calvin cycle. In Arabidopsis thaliana (Mouse-ear cress), this protein is Phosphoglycerate kinase 2, chloroplastic.